A 420-amino-acid chain; its full sequence is Bone morphogenetic protein 2 (420 aa).

An N-terminal signal peptide occupies residues 1-23; that stretch reads MVAVVRSLMVLLLAQVLLEGATG. Residues 24–303 constitute a propeptide that is removed on maturation; the sequence is LIPEVGRRRY…DSVLHTREKR (280 aa). N-linked (GlcNAc...) asparagine glycosylation is found at asparagine 138, asparagine 167, asparagine 168, asparagine 172, and asparagine 362. Intrachain disulfides connect cysteine 320–cysteine 385, cysteine 349–cysteine 417, and cysteine 353–cysteine 419.

The protein belongs to the TGF-beta family. Homodimer; disulfide-linked.

The protein resides in the secreted. In terms of biological role, induces cartilage and bone formation. This chain is Bone morphogenetic protein 2 (bmp2), found in Tetraodon nigroviridis (Spotted green pufferfish).